The primary structure comprises 1215 residues: Homeodomain-interacting protein kinase 3 (1215 aa).

Residue Lys27 forms a Glycyl lysine isopeptide (Lys-Gly) (interchain with G-Cter in SUMO2) linkage. Positions 197–525 (YEVLDFLGRG…PAETLNHPFV (329 aa)) constitute a Protein kinase domain. ATP contacts are provided by residues 203–211 (LGRGTFGQV) and Lys226. Residue Asp322 is the Proton acceptor of the active site. Phosphotyrosine is present on Tyr359. An interaction with AR region spans residues 767-944 (QNRGILVKLM…NSMSDEEQES (178 aa)). The tract at residues 796 to 891 (NTNIPHSAFI…SQRHSLRECK (96 aa)) is interaction with FAS. Positions 855–1011 (QTIIIADSPS…ENGLNADEHM (157 aa)) are required for localization to nuclear speckles. The tract at residues 866-918 (AVSVITISSDTDEEETSQRHSLRECKGSLDCEACQSTLNIDRMCSLSSPDSTL) is SUMO interaction motifs (SIM); required for nuclear localization and kinase activity. The interaction with UBL1 stretch occupies residues 870–880 (ITISSDTDEEE). Low complexity predominate over residues 912–929 (SSPDSTLSTSSSGQSSPS). Positions 912–987 (SSPDSTLSTS…ELVSSADTET (76 aa)) are disordered. The span at 945-957 (SCDTVDGSPTSDS) shows a compositional bias: polar residues. A Glycyl lysine isopeptide (Lys-Gly) (interchain with G-Cter in SUMO) cross-link involves residue Lys1208.

The protein belongs to the protein kinase superfamily. CMGC Ser/Thr protein kinase family. HIPK subfamily. Interacts with Nkx1-2. Interacts with FAS and DAXX. Probably part of a complex consisting of HIPK3, FAS and FADD. Interacts with and stabilizes ligand-bound androgen receptor (AR). Interacts with UBL1/SUMO-1. Binds to NR5A1/SF1, SPEN/MINT and RUNX2. In terms of processing, autophosphorylated, but autophosphorylation is not required for catalytic activity. May be sumoylated. As to expression, overexpressed in multidrug resistant cells. Highly expressed in heart and skeletal muscle, and at lower levels in placenta, pancreas, brain, spleen, prostate, thymus, testis, small intestine, colon and leukocytes. Not found in liver and lung.

The protein resides in the cytoplasm. It is found in the nucleus. The catalysed reaction is L-seryl-[protein] + ATP = O-phospho-L-seryl-[protein] + ADP + H(+). The enzyme catalyses L-threonyl-[protein] + ATP = O-phospho-L-threonyl-[protein] + ADP + H(+). Its function is as follows. Serine/threonine-protein kinase involved in transcription regulation, apoptosis and steroidogenic gene expression. Phosphorylates JUN and RUNX2. Seems to negatively regulate apoptosis by promoting FADD phosphorylation. Enhances androgen receptor-mediated transcription. May act as a transcriptional corepressor for NK homeodomain transcription factors. The phosphorylation of NR5A1 activates SF1 leading to increased steroidogenic gene expression upon cAMP signaling pathway stimulation. In osteoblasts, supports transcription activation: phosphorylates RUNX2 that synergizes with SPEN/MINT to enhance FGFR2-mediated activation of the osteocalcin FGF-responsive element (OCFRE). This chain is Homeodomain-interacting protein kinase 3 (HIPK3), found in Homo sapiens (Human).